We begin with the raw amino-acid sequence, 306 residues long: MIVKAFSSSANLGAGYDILALAHDAFEDTIEIYAQNSSELDIKVEGNGVPLSIDKNSASFALLELLRSYDIKAKIRLKIIKGIPAGLGLGSSGASAAAAVYAANEIFKLNLSRQELVNFAMKGEIASSGSPHPDNVAASLVGGLVSVLNSNPVKVEQVPLNLEFQIILIIPFVRIEAKTKKAREMVPKQIDTSKYVTNARYLSSLLLGFIKGDRELVRLGLNDEIIEKAREPLFPHYPKIKEISLLYDAIGACVSGAGPTIAIFVDSKSDKNKILGESLNVCKAYGYECTYKIAKVSGGAWVERRD.

Residue 84 to 94 (PAGLGLGSSGA) participates in ATP binding.

It belongs to the GHMP kinase family. Homoserine kinase subfamily.

It localises to the cytoplasm. The enzyme catalyses L-homoserine + ATP = O-phospho-L-homoserine + ADP + H(+). It functions in the pathway amino-acid biosynthesis; L-threonine biosynthesis; L-threonine from L-aspartate: step 4/5. Catalyzes the ATP-dependent phosphorylation of L-homoserine to L-homoserine phosphate. In Sulfurisphaera tokodaii (strain DSM 16993 / JCM 10545 / NBRC 100140 / 7) (Sulfolobus tokodaii), this protein is Homoserine kinase.